A 216-amino-acid chain; its full sequence is Protein Syd (216 aa).

This sequence belongs to the Syd family.

The protein localises to the cell inner membrane. Its function is as follows. Interacts with the SecY protein in vivo. May bind preferentially to an uncomplexed state of SecY, thus functioning either as a chelating agent for excess SecY in the cell or as a regulatory factor that negatively controls the translocase function. The polypeptide is Protein Syd (Shewanella baltica (strain OS185)).